A 421-amino-acid polypeptide reads, in one-letter code: Carboxypeptidase A4 (421 aa).

The signal sequence occupies residues 1–16 (MRWILFIGALIGSSIC). A propeptide spans 17-113 (GQEKFFGDQV…EMQHNEGQER (97 aa)) (activation peptide). A protein is bound by residues Pro69, Val71, Asn119, Tyr123, His124, Ser125, Glu127, and Phe163. A Peptidase M14 domain is found at 122–416 (AYHSLEAIYH…LGLKTIMEHV (295 aa)). Zn(2+) is bound by residues His181 and Glu184. A protein contacts are provided by Arg196, Lys197, and Ser248. Cys250 and Cys273 are oxidised to a cystine. The N-linked (GlcNAc...) asparagine glycan is linked to Asn260. Position 270 (Asp270) interacts with a protein. Residue His308 participates in Zn(2+) binding. Glu382 (proton donor/acceptor) is an active-site residue.

The protein belongs to the peptidase M14 family. In terms of assembly, monomer. Interacts with LXN. It depends on Zn(2+) as a cofactor. As to expression, fetal expression in the adrenal gland, brain, heart, intestine, kidney, liver and lung. Except for fetal brain that shows no imprinting, expression was found preferentially from the maternal allele.

It localises to the secreted. With respect to regulation, inhibited by interaction with the metallocarboxypeptidase inhibitor (MCPI) from N.versicolor that binds to the catalytic zinc ion. Also inhibited by interaction with the S.magnifica carboxypeptidase inhibitor SmCI that penetrates the active site groove and inhibits activity by emulating a C-terminal substrate. Additionally inhibited by a carboxypeptidase inhibitor from H.medicinalis (leech) and R.bursa (tick). In terms of biological role, metalloprotease that cleaves hydrophobic C-terminal residues with a preference for -Phe, -Leu, -Ile, -Met, -Tyr and -Val. May function in peptide hormone and/or neuropeptide catabolism. This chain is Carboxypeptidase A4 (CPA4), found in Homo sapiens (Human).